Here is a 127-residue protein sequence, read N- to C-terminus: Egg cell-secreted protein 1.4 (127 aa).

The first 25 residues, 1–25, serve as a signal peptide directing secretion; that stretch reads MASNTTFLFSTVTLLIILLNTTVSG.

Belongs to the plant egg cell-secreted peptide family. As to expression, restricted to female reproductive tissues, specifically accumulating in storage vesicles of the unfertilized egg cell.

The protein localises to the cytoplasmic vesicle. It is found in the secreted. In terms of biological role, involved in the regulation of gamete interactions during the double fertilization and to prevent multiple-pollen tube attraction; mediates the redistribution of the gamete fusogen HAP2/GCS1 to the cell surface after secretion upon sperm arrival. The protein is Egg cell-secreted protein 1.4 (EC1.4) of Arabidopsis thaliana (Mouse-ear cress).